The following is a 325-amino-acid chain: tRNA dimethylallyltransferase (325 aa).

12-19 (GPTASGKT) serves as a coordination point for ATP. 14–19 (TASGKT) lines the substrate pocket. Interaction with substrate tRNA regions lie at residues 37–40 (DSAL), 161–165 (QRIHR), and 244–249 (RCVGYR).

This sequence belongs to the IPP transferase family. In terms of assembly, monomer. Requires Mg(2+) as cofactor.

The catalysed reaction is adenosine(37) in tRNA + dimethylallyl diphosphate = N(6)-dimethylallyladenosine(37) in tRNA + diphosphate. In terms of biological role, catalyzes the transfer of a dimethylallyl group onto the adenine at position 37 in tRNAs that read codons beginning with uridine, leading to the formation of N6-(dimethylallyl)adenosine (i(6)A). This chain is tRNA dimethylallyltransferase, found in Chromobacterium violaceum (strain ATCC 12472 / DSM 30191 / JCM 1249 / CCUG 213 / NBRC 12614 / NCIMB 9131 / NCTC 9757 / MK).